Consider the following 457-residue polypeptide: ATP-dependent protease ATPase subunit HslU (457 aa).

ATP-binding positions include Ile18 and 60 to 65; that span reads GVGKTE. The interval 142–171 is disordered; that stretch reads KQPGMGFFNPAAPEEQEEQPSADQSSTREK. Asp269, Glu335, and Arg407 together coordinate ATP.

The protein belongs to the ClpX chaperone family. HslU subfamily. A double ring-shaped homohexamer of HslV is capped on each side by a ring-shaped HslU homohexamer. The assembly of the HslU/HslV complex is dependent on binding of ATP.

Its subcellular location is the cytoplasm. Functionally, ATPase subunit of a proteasome-like degradation complex; this subunit has chaperone activity. The binding of ATP and its subsequent hydrolysis by HslU are essential for unfolding of protein substrates subsequently hydrolyzed by HslV. HslU recognizes the N-terminal part of its protein substrates and unfolds these before they are guided to HslV for hydrolysis. The sequence is that of ATP-dependent protease ATPase subunit HslU from Maridesulfovibrio salexigens (strain ATCC 14822 / DSM 2638 / NCIMB 8403 / VKM B-1763) (Desulfovibrio salexigens).